The chain runs to 142 residues: Small ribosomal subunit protein uS12 (142 aa).

The segment at 1–30 (MGKTHGMGAARKLKSHRRTQRWADKSYKKS) is disordered. The segment covering 11 to 20 (RKLKSHRRTQ) has biased composition (basic residues). Positions 21 to 30 (RWADKSYKKS) are enriched in basic and acidic residues. The residue at position 61 (Pro61) is a Hydroxyproline.

This sequence belongs to the universal ribosomal protein uS12 family.

The polypeptide is Small ribosomal subunit protein uS12 (RPS23) (Euphorbia esula (Leafy spurge)).